Consider the following 260-residue polypeptide: Opacity protein opA58 (260 aa).

Positions 1–23 (MNPAPKKPSLLFSSLLFSSAAQA) are cleaved as a signal peptide.

It belongs to the opacity porin family.

Its subcellular location is the cell outer membrane. Functionally, implicated in a number of adherence functions. OPA proteins are implicated in pathogenesis and are subject to phase variation. The polypeptide is Opacity protein opA58 (opaJ) (Neisseria gonorrhoeae).